Here is a 610-residue protein sequence, read N- to C-terminus: UvrABC system protein C (610 aa).

Positions 13–91 (HLPGVYRMYD…IKENQPKYNV (79 aa)) constitute a GIY-YIG domain. The 36-residue stretch at 201 to 236 (GQVVEHLVQKMENAAQELDFEAAARFRDQIQSVRAV) folds into the UVR domain.

The protein belongs to the UvrC family. Interacts with UvrB in an incision complex.

It localises to the cytoplasm. In terms of biological role, the UvrABC repair system catalyzes the recognition and processing of DNA lesions. UvrC both incises the 5' and 3' sides of the lesion. The N-terminal half is responsible for the 3' incision and the C-terminal half is responsible for the 5' incision. This Actinobacillus pleuropneumoniae serotype 7 (strain AP76) protein is UvrABC system protein C.